A 302-amino-acid polypeptide reads, in one-letter code: L-glutamate/L-aspartate-binding protein (302 aa).

Positions 1–23 (MRIAPSLLSTAIVAALLSAPVVA) are cleaved as a signal peptide.

Belongs to the bacterial solute-binding protein 3 family.

The protein resides in the periplasm. In terms of biological role, binds L-glutamate and L-aspartate. In Pseudomonas aeruginosa (strain ATCC 15692 / DSM 22644 / CIP 104116 / JCM 14847 / LMG 12228 / 1C / PRS 101 / PAO1), this protein is L-glutamate/L-aspartate-binding protein.